Here is a 274-residue protein sequence, read N- to C-terminus: Undecaprenyl-diphosphatase 2 (274 aa).

The next 6 membrane-spanning stretches (helical) occupy residues 47–64, 82–102, 110–130, 185–205, 219–239, and 249–269; these read VFVI…CWEY, WKFV…GLTF, LFSP…ILWA, ATEF…LYDL, LMAV…RGLI, and VFAW…WSGL.

Belongs to the UppP family.

It localises to the cell inner membrane. It carries out the reaction di-trans,octa-cis-undecaprenyl diphosphate + H2O = di-trans,octa-cis-undecaprenyl phosphate + phosphate + H(+). Functionally, catalyzes the dephosphorylation of undecaprenyl diphosphate (UPP). Confers resistance to bacitracin. In Rhodospirillum rubrum (strain ATCC 11170 / ATH 1.1.1 / DSM 467 / LMG 4362 / NCIMB 8255 / S1), this protein is Undecaprenyl-diphosphatase 2.